A 1213-amino-acid polypeptide reads, in one-letter code: MIDVNKFESMQIGLASPDKIRSWSYGEVKKPETINYRTLKPEKDGLFDERIFGPTKDWECACGKYKRIRYKGIVCDRCGVEVTRSKVRRERMGHIELAAPVTHIWYFKGIPSRMGLVLDMSPRALEEIIYFASYVVIESGNTPLEKKQLLSEREYREKKAQYGNEFEAAMGAEAIKRLLNNVDLEKEARDLKETLKDASGQKRTRAVRRLDIIEAFVTSGNEPAWMVMDAIPVIPPDLRPMVQLEGGRFATSDLNDLYRRVINRNNRLKRLLDLNAPGIIVQNEKRMLQEAVDALIDNGRRGRPVAGPGNRPLKSLSHMLKGKQGRFRQNLLGKRVDYSGRSVIDVGPFLKMNQMGLPRQMALELFKPFIMKELVKRELASNIKNAKRKIEHADDDVWGVLEDVIKEHPVLLNRAPTLHRLGIQAFEPVLVSGKAMRLHPLACEAYNADFDGDQMAIHVPLSDEAQAEARLLMLAAHHILAPKDGKPVVTPSQDMVIGNYYLTTEEIGREGEGMIFKDLNEAQKAYQSGYVHLHSRVGIQVSSMPDKPFTDDQKQAVLVTTVGKAIFNNILPGKFPYLNEPTNDNLIAGTPDKYFLKPGEDIHQFLDAQEIIPPFKKGFLADIIAEVYKQYHVTATSLLLDRMKDLGYNISTKSGLTVGVADITGLKEKPAIIAEAHKQVNTISKQFRRGLITDDERYERVIGVWNDAKDQIQQKLIESFNADNPIFMMSDSGARGNISNFTQLAGMRGLMAAPNGKIMELPILSNFREGLSVLEMFISTHGARKGMTDTALKTANSGYLTRRLVDVAQDVIVREKDCGTDRGLRIHAIMEGNEVIEPLYDRILGRYTMKTVFDPETHDEIVGNNVLIDEDLAHKIVDAGVTEVTIRSAFTCNTKHGVCEHCYGRNMATGDEVEVGEAVGTVAAQSIGEPGTQLTMRNFHTGGVAGDDITQGLPRVQEIVESRNPKGRAEISEVTGTVELIEENPAERTKEVTVKGETDTRTYTLPLTARMAVSEGDFIHRGAALNIGSIDPKQLIQVRDVLSTENYLLREVQKVYRMQGVEIGDKHVEIMIRQMLRKVRVMDPGDTDVLPGTLMDIADFKDENYKTLIAGGIPATSRPVILGITKAALETNSFLSAASFQETTRVLTDAAIRGKNDPLIGLKENVIIGKIIPAGTGMPVYRHIKPKEVGNVADGVYSISDLEKQMQEQDASK.

Zn(2+) is bound by residues Cys60, Cys62, Cys75, and Cys78. Asp449, Asp451, and Asp453 together coordinate Mg(2+). Cys818, Cys892, Cys899, and Cys902 together coordinate Zn(2+).

It belongs to the RNA polymerase beta' chain family. As to quaternary structure, the RNAP catalytic core consists of 2 alpha, 1 beta, 1 beta' and 1 omega subunit. When a sigma factor is associated with the core the holoenzyme is formed, which can initiate transcription. Mg(2+) serves as cofactor. Requires Zn(2+) as cofactor.

The enzyme catalyses RNA(n) + a ribonucleoside 5'-triphosphate = RNA(n+1) + diphosphate. Its function is as follows. DNA-dependent RNA polymerase catalyzes the transcription of DNA into RNA using the four ribonucleoside triphosphates as substrates. The chain is DNA-directed RNA polymerase subunit beta' from Lactiplantibacillus plantarum (strain ATCC BAA-793 / NCIMB 8826 / WCFS1) (Lactobacillus plantarum).